The chain runs to 200 residues: Large ribosomal subunit protein bL25 (200 aa).

Disordered regions lie at residues 1-20 and 179-200; these read MTIE…ASRR and PVVA…GEAA.

It belongs to the bacterial ribosomal protein bL25 family. CTC subfamily. In terms of assembly, part of the 50S ribosomal subunit; part of the 5S rRNA/L5/L18/L25 subcomplex. Contacts the 5S rRNA. Binds to the 5S rRNA independently of L5 and L18.

Functionally, this is one of the proteins that binds to the 5S RNA in the ribosome where it forms part of the central protuberance. The polypeptide is Large ribosomal subunit protein bL25 (Azoarcus sp. (strain BH72)).